Here is a 340-residue protein sequence, read N- to C-terminus: MIPVINQEKQGISGDFRLSVAPMMNWTDRYCRVFHRVLAPSARLYTEMVHAKAVIYGDRERLLGFASVEQPVALQLGGSEPALLAKAARIAVDWGYSEINLNCGCPSDRVQAGSFGARLMREPALVADCVAAMAAVVSVPVTVKCRLGVNEDDDYGRFAKFVDWVSRASSSRMIVVHARNAWLQGLSPKENREIPPLRYDWVYRLKRERPELAVVLNGGITSVEAGLDHLLMVDGVMLGRAAYQDPYILHQFDCALSNAPLLPRALLLRALRPYVEVWLEQGLTLRHIVRHLFGLFHGQPGGRVFRQVLTQGGQRSDADWSLVEQALSIIEDQETYAAVV.

FMN is bound by residues 22-24 (PMM) and Q75. C105 functions as the Proton donor in the catalytic mechanism. FMN contacts are provided by residues K144, H177, 217–219 (NGG), and 239–240 (GR).

The protein belongs to the Dus family. DusA subfamily. The cofactor is FMN.

It catalyses the reaction 5,6-dihydrouridine(20) in tRNA + NADP(+) = uridine(20) in tRNA + NADPH + H(+). The enzyme catalyses 5,6-dihydrouridine(20) in tRNA + NAD(+) = uridine(20) in tRNA + NADH + H(+). It carries out the reaction 5,6-dihydrouridine(20a) in tRNA + NADP(+) = uridine(20a) in tRNA + NADPH + H(+). The catalysed reaction is 5,6-dihydrouridine(20a) in tRNA + NAD(+) = uridine(20a) in tRNA + NADH + H(+). Catalyzes the synthesis of 5,6-dihydrouridine (D), a modified base found in the D-loop of most tRNAs, via the reduction of the C5-C6 double bond in target uridines. Specifically modifies U20 and U20a in tRNAs. The sequence is that of tRNA-dihydrouridine(20/20a) synthase from Xylella fastidiosa (strain 9a5c).